The following is a 126-amino-acid chain: Desulfoferrodoxin (126 aa).

Residues Cys-10, Cys-13, Cys-29, Cys-30, His-49, His-69, His-75, Cys-116, and His-119 each coordinate Fe cation.

It belongs to the desulfoferrodoxin family. Homodimer. Fe(3+) serves as cofactor. Cu(2+) is required as a cofactor.

The enzyme catalyses reduced [rubredoxin] + superoxide + 2 H(+) = oxidized [rubredoxin] + H2O2. Functionally, catalyzes the one-electron reduction of superoxide anion radical to hydrogen peroxide at a nonheme ferrous iron center. Plays a fundamental role in case of oxidative stress via its superoxide detoxification activity. The sequence is that of Desulfoferrodoxin (dfx) from Nitratidesulfovibrio vulgaris (strain ATCC 29579 / DSM 644 / CCUG 34227 / NCIMB 8303 / VKM B-1760 / Hildenborough) (Desulfovibrio vulgaris).